The following is a 1038-amino-acid chain: Translation initiation factor IF-2 (1038 aa).

2 disordered regions span residues 39 to 346 and 403 to 451; these read TISE…KWQE and KPKA…PEKV. Residues 103–125 show a composition bias toward polar residues; sequence RNTTSNAPEASVANNQIASSEAN. The span at 157–176 shows a compositional bias: low complexity; sequence PQKPAAPEAEPEAQSQAPAK. Basic and acidic residues-rich tracts occupy residues 178-197 and 226-243; these read AVEK…ERQP and PILK…DQAK. Over residues 407-423 the composition is skewed to low complexity; it reads ARAATAATAAPISSPTT. The segment covering 431–450 has biased composition (basic and acidic residues); it reads NNRDQNRRQETEVKRERPEK. The tr-type G domain occupies 532–705; the sequence is RRPPVVTIMG…LLVAEVGELS (174 aa). Residues 541 to 548 are G1; it reads GHVDHGKT. Residue 541–548 participates in GTP binding; the sequence is GHVDHGKT. The tract at residues 566–570 is G2; that stretch reads GITQH. The tract at residues 591–594 is G3; it reads DTPG. GTP contacts are provided by residues 591-595 and 645-648; these read DTPGH and NKID. The segment at 645–648 is G4; sequence NKID. Residues 681-683 form a G5 region; the sequence is SAI.

It belongs to the TRAFAC class translation factor GTPase superfamily. Classic translation factor GTPase family. IF-2 subfamily.

It localises to the cytoplasm. One of the essential components for the initiation of protein synthesis. Protects formylmethionyl-tRNA from spontaneous hydrolysis and promotes its binding to the 30S ribosomal subunits. Also involved in the hydrolysis of GTP during the formation of the 70S ribosomal complex. The polypeptide is Translation initiation factor IF-2 (Trichormus variabilis (strain ATCC 29413 / PCC 7937) (Anabaena variabilis)).